Consider the following 268-residue polypeptide: Tryptophan synthase alpha chain (268 aa).

Residues E49 and D60 each act as proton acceptor in the active site.

Belongs to the TrpA family. Tetramer of two alpha and two beta chains.

It carries out the reaction (1S,2R)-1-C-(indol-3-yl)glycerol 3-phosphate + L-serine = D-glyceraldehyde 3-phosphate + L-tryptophan + H2O. The protein operates within amino-acid biosynthesis; L-tryptophan biosynthesis; L-tryptophan from chorismate: step 5/5. Its function is as follows. The alpha subunit is responsible for the aldol cleavage of indoleglycerol phosphate to indole and glyceraldehyde 3-phosphate. The sequence is that of Tryptophan synthase alpha chain from Vibrio parahaemolyticus serotype O3:K6 (strain RIMD 2210633).